A 263-amino-acid chain; its full sequence is MKRQGFQFKQFFIEHQDCAMKVGTDSIMLGSWVTGGDLINASETQRFLDIGTGSGLLAIMLAQKSSEQTHISGIDIDKDAIGQATRNMANSPWSHRLDAQQASVQSFTQNCDNPKFALIISNPPYFNSPILTHEKQAQKRVAARQTSELTHHTLLNNVVRLLAPSGVFYCVLPSDVSQAFIELADPLGLSLIKQLTVFSKPDTNALRELLAFRFNDPSCIRDTISRALTSPEPPTRDTLTIYTQSHQYSDQYKALCKDYYLNF.

This sequence belongs to the methyltransferase superfamily. tRNA (adenine-N(6)-)-methyltransferase family.

Its subcellular location is the cytoplasm. It catalyses the reaction adenosine(37) in tRNA1(Val) + S-adenosyl-L-methionine = N(6)-methyladenosine(37) in tRNA1(Val) + S-adenosyl-L-homocysteine + H(+). Specifically methylates the adenine in position 37 of tRNA(1)(Val) (anticodon cmo5UAC). This is tRNA1(Val) (adenine(37)-N6)-methyltransferase from Pseudoalteromonas atlantica (strain T6c / ATCC BAA-1087).